A 116-amino-acid polypeptide reads, in one-letter code: Protein aq_1857 (116 aa).

This sequence belongs to the HesB/IscA family.

The protein is Protein aq_1857 of Aquifex aeolicus (strain VF5).